A 253-amino-acid chain; its full sequence is TasA anchoring/assembly protein (253 aa).

The N-terminal stretch at 1-32 is a signal peptide; it reads MFRLFHNQQKAKTKLKVLLIFQLSVIFSLTAA. The interval 50 to 57 is important for TasA fiber formation; sequence TFDVSLQT. Basic and acidic residues predominate over residues 190–241; it reads EKPTVPKKETKSDVKKENETTQKDIPEKTMKEETSQEAVTKEKETQSDQKES. The tract at residues 190-253 is disordered; the sequence is EKPTVPKKET…EDEKSNEADQ (64 aa).

The protein localises to the secreted. It is found in the cell wall. Required for biofilm formation. Required for the proper anchoring and polymerization of TasA amyloid fibers at the cell surface. Is also a minor component of TasA fibers. The chain is TasA anchoring/assembly protein from Bacillus subtilis (strain 168).